The primary structure comprises 125 residues: MADLNAIVEQLSGLTIMEAAELVKQLEEKWGVSAAAAPVMVAAGGGAAAAAPVEEKTEFTVVLVDAGANKINVIKEVRAITGLGLKEAKDLVEGAPKEVKAGVAKAESEELKKKLEAAGAKVEVK.

The protein belongs to the bacterial ribosomal protein bL12 family. As to quaternary structure, homodimer. Part of the ribosomal stalk of the 50S ribosomal subunit. Forms a multimeric L10(L12)X complex, where L10 forms an elongated spine to which 2 to 4 L12 dimers bind in a sequential fashion. Binds GTP-bound translation factors.

Forms part of the ribosomal stalk which helps the ribosome interact with GTP-bound translation factors. Is thus essential for accurate translation. This chain is Large ribosomal subunit protein bL12, found in Anaeromyxobacter dehalogenans (strain 2CP-1 / ATCC BAA-258).